We begin with the raw amino-acid sequence, 251 residues long: Hydroxyacylglutathione hydrolase (251 aa).

Zn(2+) is bound by residues His-53, His-55, Asp-57, His-58, His-110, Asp-127, and His-165.

This sequence belongs to the metallo-beta-lactamase superfamily. Glyoxalase II family. In terms of assembly, monomer. Requires Zn(2+) as cofactor.

It carries out the reaction an S-(2-hydroxyacyl)glutathione + H2O = a 2-hydroxy carboxylate + glutathione + H(+). Its pathway is secondary metabolite metabolism; methylglyoxal degradation; (R)-lactate from methylglyoxal: step 2/2. Its function is as follows. Thiolesterase that catalyzes the hydrolysis of S-D-lactoyl-glutathione to form glutathione and D-lactic acid. This is Hydroxyacylglutathione hydrolase from Pectobacterium atrosepticum (strain SCRI 1043 / ATCC BAA-672) (Erwinia carotovora subsp. atroseptica).